The sequence spans 345 residues: Phosphoribosylformylglycinamidine cyclo-ligase (345 aa).

The protein belongs to the AIR synthase family.

The protein resides in the cytoplasm. It carries out the reaction 2-formamido-N(1)-(5-O-phospho-beta-D-ribosyl)acetamidine + ATP = 5-amino-1-(5-phospho-beta-D-ribosyl)imidazole + ADP + phosphate + H(+). It functions in the pathway purine metabolism; IMP biosynthesis via de novo pathway; 5-amino-1-(5-phospho-D-ribosyl)imidazole from N(2)-formyl-N(1)-(5-phospho-D-ribosyl)glycinamide: step 2/2. This chain is Phosphoribosylformylglycinamidine cyclo-ligase, found in Escherichia coli O6:K15:H31 (strain 536 / UPEC).